We begin with the raw amino-acid sequence, 1413 residues long: MAPMLSIASRSPSPALIAPHASARATGLRAPFAGNRIVGWGWGDQTKSGTDRNRASICVVLFLRVRSGEPTQAPRDPPAAVGGGGCYVRLPAPPRDRDAVLYHVCLFTLLLCFIPITALAESDIKNLFALRKAIAVGKGFLHNWFELETPPCNWSGISCVGLTVVAIDLSSTPLYVDFPSQIIAFQSLVRLNVSGCGFSGELPEAMVNLQHLQHLDLSDNQLGGPLPASLFDLKMLKVMVLDNNMFSGQLSPAIAHLQQLTVLSISTNSFSGGLPPELGSLKNLEYLDIHTNAFSGSIPASFSNLSRLLYLDANNNNLTGSIFPGIRALVNLVKLDLSSNGLVGAIPKELCQLKNLQSLILSDNELTGSIPEEIGNLKQLEVLNLLKCNLMDTVPLSIGNLEILEGLYISFNSFSGELPASVGELRNLRQLMAKSAGFTGSIPKELGNCKKLTTLVLSGNNFTGTIPEELADLVAVVLFDVEGNRLSGHIPDWIQNWSNVSSISLAQNMFDGPLPGLPLHLVSFSAESNRLSGSIPAKICQGTFLQILRLNDNNLTGSIDETFKGCKNLTELSLLDNHLHGEIPEYLALLPLVSLDLSHNNFTGMIPDRLWESSTILDISLSDNQLTGMITESIGKLLSLQSLSIDRNYLQGPLPRSIGALRNLTALSLSGNMLSEDIPIQLFNCRNLVTLDLSCNNLTGHIPKAISHLTKLNTLVLSRNRLSGAIPSELCVAFSRESHSELEYVQHIGLIDLSRNRLTGHIPRAINNCSILVELHLQDNLLSGTIPVELAELRNITTIDLSSNALVGPVLPWPVPLASLQGLLLSNNRLSGSIPSGIGNILPQITMLDLSGNALTGTLPLDLLCKESLNHLDVSDNNISGQIPFSCHEDKESPIPLIFFNASSNHFSGSLDESISNFTKLTYLDLHNNSLTGRLPSAIARVTSLYYLDLSSNDFSGTIPCGICGMFGLTFANFSGNRDGGTFTLADCAAEEGGVCAANRVDRKMPDHPFHVLEATICCIATAIVIVLVVILVVYLRRRRKMLRRRQFVLVPAGDNAMADHETTLSNNLLGRRRMKKREPPSINLATFEHAPVRVTVDEIMRATGNFDGMHVVGDGGFGTVYRAELPGGRRVAVKRLHGVGRRFQGGEREFRAEMETVGKVRHPNLVPLLGYCAAGDERFLVYEYMEHGSLEDRLRGGGGAALGWPERLTICGGAARGLAFLHHGFVPHVIHRDVKSSNVLLGEGLQPRVSDFGLARIISACETHVSTVLAGTLGYIPPEYALAMRCTAKGDVYSFGVVMLELLTGRPPTWSSAEVTAEGDDERGGGGSLVGWVRWMAARGRGGEVFDACLPVSGAEREQMARVLDVARDCTADEPWRRPTMAEVARRVGAIEAMEYGPLVVAVSSGEPPAMP.

The signal sequence occupies residues 1-23 (MAPMLSIASRSPSPALIAPHASA). Asn-153 and Asn-192 each carry an N-linked (GlcNAc...) asparagine glycan. LRR repeat units follow at residues 185–209 (FQSLVRLNVSGCGFSGELPEAMVNL), 210–233 (QHLQHLDLSDNQLGGPLPASLFDL), 235–257 (MLKVMVLDNNMFSGQLSPAIAHL), 258–281 (QQLTVLSISTNSFSGGLPPELGSL), 282–304 (KNLEYLDIHTNAFSGSIPASFSN), 306–329 (SRLLYLDANNNNLTGSIFPGIRAL), 330–353 (VNLVKLDLSSNGLVGAIPKELCQL), 354–377 (KNLQSLILSDNELTGSIPEEIGNL), 379–401 (QLEVLNLLKCNLMDTVPLSIGNL), 402–425 (EILEGLYISFNSFSGELPASVGEL), 427–449 (NLRQLMAKSAGFTGSIPKELGNC), 450–473 (KKLTTLVLSGNNFTGTIPEELADL), 475–497 (AVVLFDVEGNRLSGHIPDWIQNW), 498–518 (SNVSSISLAQNMFDGPLPGLP), 519–542 (LHLVSFSAESNRLSGSIPAKICQG), 543–565 (TFLQILRLNDNNLTGSIDETFKG), 567–589 (KNLTELSLLDNHLHGEIPEYLAL), 590–613 (LPLVSLDLSHNNFTGMIPDRLWES), 615–636 (TILDISLSDNQLTGMITESIGK), 637–661 (LLSLQSLSIDRNYLQGPLPRSIGAL), 662–685 (RNLTALSLSGNMLSEDIPIQLFNC), 687–709 (NLVTLDLSCNNLTGHIPKAISHL), 710–733 (TKLNTLVLSRNRLSGAIPSELCVA), 745–769 (VQHIGLIDLSRNRLTGHIPRAINNC), 771–793 (ILVELHLQDNLLSGTIPVELAEL), 794–817 (RNITTIDLSSNALVGPVLPWPVPL), 818–841 (ASLQGLLLSNNRLSGSIPSGIGNI), 843–866 (PQITMLDLSGNALTGTLPLDLLCK), and 868–890 (SLNHLDVSDNNISGQIPFSCHED). Residues Asn-304 and Asn-317 are each glycosylated (N-linked (GlcNAc...) asparagine). Residues Asn-461, Asn-496, and Asn-499 are each glycosylated (N-linked (GlcNAc...) asparagine). Asn-554, Asn-568, and Asn-601 each carry an N-linked (GlcNAc...) asparagine glycan. N-linked (GlcNAc...) asparagine glycans are attached at residues Asn-663 and Asn-697. Asn-768 carries N-linked (GlcNAc...) asparagine glycosylation. Asn-795 is a glycosylation site (N-linked (GlcNAc...) asparagine). 4 N-linked (GlcNAc...) asparagine glycosylation sites follow: Asn-878, Asn-901, Asn-917, and Asn-928. 2 LRR repeats span residues 918 to 942 (FTKLTYLDLHNNSLTGRLPSAIARV) and 944 to 966 (SLYYLDLSSNDFSGTIPCGICGM). Asn-973 is a glycosylation site (N-linked (GlcNAc...) asparagine). Residues 1016–1036 (TICCIATAIVIVLVVILVVYL) traverse the membrane as a helical segment. The Protein kinase domain maps to 1107–1401 (FDGMHVVGDG…IEAMEYGPLV (295 aa)). ATP contacts are provided by residues 1113–1121 (VGDGGFGTV) and Lys-1135. The active-site Proton acceptor is the Asp-1234.

The protein belongs to the protein kinase superfamily. Ser/Thr protein kinase family. In terms of tissue distribution, expressed in roots, leaves, shoots and spikelets.

Its subcellular location is the cell membrane. The enzyme catalyses L-seryl-[protein] + ATP = O-phospho-L-seryl-[protein] + ADP + H(+). The catalysed reaction is L-threonyl-[protein] + ATP = O-phospho-L-threonyl-[protein] + ADP + H(+). In terms of biological role, receptor-like kinase that may play a role male and female sporogenesis. In Oryza sativa subsp. japonica (Rice), this protein is Leucine-rich repeat receptor protein kinase MSL1.